The primary structure comprises 655 residues: tRNA 5-methylaminomethyl-2-thiouridine biosynthesis bifunctional protein MnmC (655 aa).

A tRNA (mnm(5)s(2)U34)-methyltransferase region spans residues 1-236; sequence MTDPLVPAVL…KRAMLVGRFA (236 aa). The segment at 260-655 is FAD-dependent cmnm(5)s(2)U34 oxidoreductase; that stretch reads IGTGLAGCAA…LRALRQGTAS (396 aa).

The protein in the N-terminal section; belongs to the methyltransferase superfamily. tRNA (mnm(5)s(2)U34)-methyltransferase family. It in the C-terminal section; belongs to the DAO family. The cofactor is FAD.

The protein localises to the cytoplasm. The enzyme catalyses 5-aminomethyl-2-thiouridine(34) in tRNA + S-adenosyl-L-methionine = 5-methylaminomethyl-2-thiouridine(34) in tRNA + S-adenosyl-L-homocysteine + H(+). Functionally, catalyzes the last two steps in the biosynthesis of 5-methylaminomethyl-2-thiouridine (mnm(5)s(2)U) at the wobble position (U34) in tRNA. Catalyzes the FAD-dependent demodification of cmnm(5)s(2)U34 to nm(5)s(2)U34, followed by the transfer of a methyl group from S-adenosyl-L-methionine to nm(5)s(2)U34, to form mnm(5)s(2)U34. The sequence is that of tRNA 5-methylaminomethyl-2-thiouridine biosynthesis bifunctional protein MnmC from Paraburkholderia phymatum (strain DSM 17167 / CIP 108236 / LMG 21445 / STM815) (Burkholderia phymatum).